The sequence spans 173 residues: Mesencephalic astrocyte-derived neurotrophic factor homolog (173 aa).

Positions 1 to 22 (MKTWHMVVVIGFLATLAQTSLA) are cleaved as a signal peptide. 4 disulfides stabilise this stretch: cysteine 28/cysteine 114, cysteine 31/cysteine 103, cysteine 61/cysteine 72, and cysteine 148/cysteine 151.

This sequence belongs to the ARMET family.

The protein resides in the secreted. In terms of biological role, required during the maturation of the embryonic nervous system for maintenance of neuronal and cuticular connectivity. Essential for maintenance of dopaminergic neurons and dopamine levels. The protein is Mesencephalic astrocyte-derived neurotrophic factor homolog of Drosophila simulans (Fruit fly).